Consider the following 767-residue polypeptide: MTISPPERGSDAKSQVEKVDNPATFELFGKPGHFDRALAKGPKTTSWVWNLHANAHDFDAHTSDLQEVSRRIFSAHFGHLAVIFIWLSGAFFHGARFSNYSGWLADPTHVKPSAQVVWPIFGQEILNGDMGAGFQGIQITSGLFHVWRGWGITSETQLMALAIGALVMAGLMLNAGVFHYHKAAPKLEWFQNVESMLNHHLAGLLGLGSLSWAGHLIHVSAPVSKLMDAIDAGQPLVLDGKTIATVADIPLPHEFFNQDLLAQLYPGIGAGIGAFFSGNWAAYSDFLTFKGGLNPVTGSLWMTDIAHHHVAIAVLFIVAGHMYRTNWGIGHSIKEIHEGQKGDPLLFPAPNGHDGLYEFLTTSWHAQLGLNLAMLGSLSIIVAQHMYAMPPYAYMAVDYPTQIGLFTHHMWIGGFLIVGGAAHAAIAMVRDYDPAKHIDNVLDRVLKARDAIISHLNWVCIWLGAHSFGLYIHNDTMRALGRPQDMFSDSAISIQPIFAQWIQNAHAAAAGSTAPNALAGVSEVFNGSVVAVGGKVAAAPMPLGTADFMVHHIHAFTIHVTVLILLKGVLYARSSRLIPDKANLGFRFSCDGPGRGGTCQVSAWDHVFLGLFWMYNSLSIVIFHFSWKMQSDIWGTVNADGSVAHITNGNFAQSAITINGWLRDYLWAQAVQVINSYGSNTSAYGIMFLGAHFIWAFSLMFLFSGRGYWQELIESIVWAHNKLKVAPAIQPRALSIIQGRAVGVAHYLLGGIATTWAFFHAHILVVG.

The next 8 membrane-spanning stretches (helical) occupy residues 72-95, 158-181, 197-221, 305-323, 364-387, 403-429, 451-473, and 548-566; these read IFSA…FHGA, LMAL…FHYH, LNHH…HVSA, IAHH…GHMY, WHAQ…QHMY, IGLF…IAMV, AIIS…LYIH, and FMVH…LILL. [4Fe-4S] cluster contacts are provided by Cys590 and Cys599. 2 helical membrane passes run 606-627 and 681-703; these read HVFL…HFSW and TSAY…MFLF. His692 contacts chlorophyll a'. Met700 and Tyr708 together coordinate chlorophyll a. Phylloquinone is bound at residue Trp709. Residues 741 to 761 form a helical membrane-spanning segment; it reads AVGVAHYLLGGIATTWAFFHA.

The protein belongs to the PsaA/PsaB family. The PsaA/B heterodimer binds the P700 chlorophyll special pair and subsequent electron acceptors. PSI consists of a core antenna complex that captures photons, and an electron transfer chain that converts photonic excitation into a charge separation. The cyanobacterial PSI reaction center is composed of one copy each of PsaA,B,C,D,E,F,I,J,K,L,M and X, and forms trimeric complexes. The cofactor is PSI electron transfer chain: 5 chlorophyll a, 1 chlorophyll a', 2 phylloquinones and 3 4Fe-4S clusters. PSI core antenna: 90 chlorophyll a, 22 carotenoids, 3 phospholipids and 1 galactolipid. P700 is a chlorophyll a/chlorophyll a' dimer, A0 is one or more chlorophyll a, A1 is one or both phylloquinones and FX is a shared 4Fe-4S iron-sulfur center..

The protein resides in the cellular thylakoid membrane. It carries out the reaction reduced [plastocyanin] + hnu + oxidized [2Fe-2S]-[ferredoxin] = oxidized [plastocyanin] + reduced [2Fe-2S]-[ferredoxin]. PsaA and PsaB bind P700, the primary electron donor of photosystem I (PSI), as well as the electron acceptors A0, A1 and FX. PSI is a plastocyanin/cytochrome c6-ferredoxin oxidoreductase, converting photonic excitation into a charge separation, which transfers an electron from the donor P700 chlorophyll pair to the spectroscopically characterized acceptors A0, A1, FX, FA and FB in turn. Oxidized P700 is reduced on the lumenal side of the thylakoid membrane by plastocyanin or cytochrome c6. The protein is Photosystem I P700 chlorophyll a apoprotein A1 of Parasynechococcus marenigrum (strain WH8102).